Here is a 232-residue protein sequence, read N- to C-terminus: Phosphatidylserine decarboxylase proenzyme (232 aa).

Ser-190 functions as the Schiff-base intermediate with substrate; via pyruvic acid in the catalytic mechanism. Ser-190 bears the Pyruvic acid (Ser); by autocatalysis mark.

The protein belongs to the phosphatidylserine decarboxylase family. PSD-A subfamily. In terms of assembly, heterodimer of a large membrane-associated beta subunit and a small pyruvoyl-containing alpha subunit. The cofactor is pyruvate. Post-translationally, is synthesized initially as an inactive proenzyme. Formation of the active enzyme involves a self-maturation process in which the active site pyruvoyl group is generated from an internal serine residue via an autocatalytic post-translational modification. Two non-identical subunits are generated from the proenzyme in this reaction, and the pyruvate is formed at the N-terminus of the alpha chain, which is derived from the carboxyl end of the proenzyme. The post-translation cleavage follows an unusual pathway, termed non-hydrolytic serinolysis, in which the side chain hydroxyl group of the serine supplies its oxygen atom to form the C-terminus of the beta chain, while the remainder of the serine residue undergoes an oxidative deamination to produce ammonia and the pyruvoyl prosthetic group on the alpha chain.

The protein localises to the cell membrane. It carries out the reaction a 1,2-diacyl-sn-glycero-3-phospho-L-serine + H(+) = a 1,2-diacyl-sn-glycero-3-phosphoethanolamine + CO2. The protein operates within phospholipid metabolism; phosphatidylethanolamine biosynthesis; phosphatidylethanolamine from CDP-diacylglycerol: step 2/2. Catalyzes the formation of phosphatidylethanolamine (PtdEtn) from phosphatidylserine (PtdSer). The sequence is that of Phosphatidylserine decarboxylase proenzyme from Brucella canis (strain ATCC 23365 / NCTC 10854 / RM-666).